We begin with the raw amino-acid sequence, 803 residues long: Ribonuclease II, chloroplastic/mitochondrial (803 aa).

Residues 1–35 constitute a chloroplast and mitochondrion transit peptide; that stretch reads MMSVRAINGCSIIRTATSAGGPPVSLFRHRIQRLR. The RNB domain occupies 399–694; that stretch reads RIDLTHLKVY…AHYQIKAFLR (296 aa).

It belongs to the RNR ribonuclease family. As to expression, expressed in seedlings, roots, leaves and flowers.

Its subcellular location is the mitochondrion. It is found in the plastid. The protein localises to the chloroplast. It carries out the reaction Exonucleolytic cleavage in the 3'- to 5'-direction to yield nucleoside 5'-phosphates.. Its function is as follows. 3'-5' exoribonuclease that catalyzes 3' maturation of chloroplast and mitochondrion ribosomal RNAs; degrades short nucleotidic extensions to generate the mature 3'-ends. Involved in the maturation of 23S, 16S and 5S rRNAs. This chain is Ribonuclease II, chloroplastic/mitochondrial (RNR1), found in Arabidopsis thaliana (Mouse-ear cress).